Consider the following 535-residue polypeptide: MAKKVVVIGAGVSGLISLKCCVDEGLEPTCFERTEDIGGLWRFKENVEDGRASIYRSVITNTSKEMSCFSDFPMPEDFPNFLHNSKLLEYFRIFAKKFDLLKYIQFQTTVISVKKRPDFASSGQWEVYTQSNGKEQRTVFDAVMVCSGHHIQPHLPLKSFPGIERFRGQYFHSREYKHPVGFEGKRILVVGIGNSAADIASELSKTAAQVFVSTRHGSWVMSRISEDGYPWDMVFHTRFSSMLRNVLPRTVVKWMMEQQMNRWFNHENYGLVPQNKYLMKEPVLNDDLPSRLLYGAIKVKTRVKELTETAVVFEDGTVEEDVDIIVFATGYTFSFSFLEDSLVKVEDNRVSLYKAMFPPHLEKPTLACIGLIQPLGSIFPTVELQARWATRVFKGLCSLPSETTMMADIVERNEKRVNLFGKSQSQILQTNYVDYLDELALEIGAKPDFVSLFFKDPKLAVKLYFGPCNSYQYRLVGPGQWEGARNAILTQKQRILKPLKTRTLQSSDSAPVSFLLKILGLLAVVLAFFFQLQGF.

At A2 the chain carries N-acetylalanine. FAD is bound by residues G9–S13, E32, L40–W41, and N61–T62. NADP(+)-binding positions include T60–N61 and S195–D198. A Glycyl lysine isopeptide (Lys-Gly) (interchain with G-Cter in SUMO) cross-link involves residue K492. The chain crosses the membrane as a helical span at residues A510 to F530.

Belongs to the FMO family. FAD serves as cofactor. It depends on Mg(2+) as a cofactor.

The protein resides in the microsome membrane. The protein localises to the endoplasmic reticulum membrane. In terms of biological role, catalyzes the oxidative metabolism of numerous xenobiotics, including mainly therapeutic drugs and insecticides that contain a soft nucleophile, most commonly nitrogen and sulfur and participates to their bioactivation. Catalyzes the S-oxygenation of the prodrug ethionamide (ETA) to the S-oxide (ETASO), the first step in its bioactivation following by the second oxygenation to the sulfinic acid but to a lesser extend. In Mus musculus (Mouse), this protein is Dimethylaniline monooxygenase [N-oxide-forming] 2.